The primary structure comprises 213 residues: Large ribosomal subunit protein uL3 (213 aa).

Gln151 carries the post-translational modification N5-methylglutamine.

The protein belongs to the universal ribosomal protein uL3 family. As to quaternary structure, part of the 50S ribosomal subunit. Forms a cluster with proteins L14 and L19. Post-translationally, methylated by PrmB.

Its function is as follows. One of the primary rRNA binding proteins, it binds directly near the 3'-end of the 23S rRNA, where it nucleates assembly of the 50S subunit. This chain is Large ribosomal subunit protein uL3, found in Allorhizobium ampelinum (strain ATCC BAA-846 / DSM 112012 / S4) (Agrobacterium vitis (strain S4)).